The following is a 483-amino-acid chain: NADH-quinone oxidoreductase subunit N (483 aa).

The next 13 membrane-spanning stretches (helical) occupy residues 11–31 (ALPE…DLFL), 37–57 (SLIY…TACT), 82–100 (LMMY…QYVS), 110–130 (FALT…QHFL), 164–184 (FVLG…LYGV), 205–225 (AVLV…LGAV), 239–259 (PTAV…AFMI), 268–288 (VLAI…ILIG), 301–321 (MLAY…MSAG), 329–349 (MFYI…MLLL), 372–392 (YAFL…TLGF), 406–426 (GFVG…FYYL), and 446–466 (PIDM…LGMF).

The protein belongs to the complex I subunit 2 family. In terms of assembly, NDH-1 is composed of 14 different subunits. Subunits NuoA, H, J, K, L, M, N constitute the membrane sector of the complex.

It localises to the cell inner membrane. It catalyses the reaction a quinone + NADH + 5 H(+)(in) = a quinol + NAD(+) + 4 H(+)(out). Functionally, NDH-1 shuttles electrons from NADH, via FMN and iron-sulfur (Fe-S) centers, to quinones in the respiratory chain. The immediate electron acceptor for the enzyme in this species is believed to be ubiquinone. Couples the redox reaction to proton translocation (for every two electrons transferred, four hydrogen ions are translocated across the cytoplasmic membrane), and thus conserves the redox energy in a proton gradient. This chain is NADH-quinone oxidoreductase subunit N, found in Methylovorus glucosotrophus (strain SIP3-4).